The following is a 362-amino-acid chain: UDP-3-O-acylglucosamine N-acyltransferase 1 (362 aa).

His-258 functions as the Proton acceptor in the catalytic mechanism.

It belongs to the transferase hexapeptide repeat family. LpxD subfamily. As to quaternary structure, homotrimer.

It carries out the reaction a UDP-3-O-[(3R)-3-hydroxyacyl]-alpha-D-glucosamine + a (3R)-hydroxyacyl-[ACP] = a UDP-2-N,3-O-bis[(3R)-3-hydroxyacyl]-alpha-D-glucosamine + holo-[ACP] + H(+). Its pathway is bacterial outer membrane biogenesis; LPS lipid A biosynthesis. Its function is as follows. Catalyzes the N-acylation of UDP-3-O-acylglucosamine using 3-hydroxyacyl-ACP as the acyl donor. Is involved in the biosynthesis of lipid A, a phosphorylated glycolipid that anchors the lipopolysaccharide to the outer membrane of the cell. The chain is UDP-3-O-acylglucosamine N-acyltransferase 1 from Nitrobacter winogradskyi (strain ATCC 25391 / DSM 10237 / CIP 104748 / NCIMB 11846 / Nb-255).